We begin with the raw amino-acid sequence, 688 residues long: Small ribosomal subunit protein mS39 (688 aa).

Residues 1–37 (MASVASARWLRVSCGLCVPLTARRAGPCGRTPSSRFY) constitute a mitochondrion transit peptide. N6-acetyllysine is present on K126. PPR repeat units follow at residues 149-183 (IEEI…GTTV), 184-219 (SLET…EELE), 258-292 (NAHS…RLRA), 293-333 (DVHT…NVKP), 334-370 (NLQT…GIEP), 371-412 (SLAT…SPKD), 415-449 (DDMF…DNRK), 457-491 (RNFY…VFFP), 492-526 (HSQT…GHTF), and 575-609 (PANS…NKIP). Residues 667–688 (GDLTALTSDSESDSDSDTSKDK) are disordered.

It belongs to the mitochondrion-specific ribosomal protein mS39 family. Component of the mitochondrial ribosome small subunit (28S) which comprises a 12S rRNA and about 30 distinct proteins. Associated with the 12S mitochondrial rRNA (12S mt-rRNA).

It localises to the mitochondrion. Mitochondrial RNA-binding protein that has a role in mitochondrial translation. The chain is Small ribosomal subunit protein mS39 (PTCD3) from Bos taurus (Bovine).